Here is a 419-residue protein sequence, read N- to C-terminus: O-methyltransferase desB (419 aa).

S-adenosyl-L-methionine contacts are provided by residues 255-256 (GG), Asp280, 306-307 (DF), and Arg323. His326 (proton acceptor) is an active-site residue.

The protein belongs to the class I-like SAM-binding methyltransferase superfamily. Cation-independent O-methyltransferase family. Requires S-adenosyl-L-methionine as cofactor.

The protein operates within secondary metabolite biosynthesis. Its function is as follows. Non-reducing polyketide synthase; part of the gene cluster that mediates the biosynthesis of the bicoumarin desertorin. The non-reducing polyketide synthase desS first catalyzes the formation of the pentaketidic 4,7-dihydroxy-5-methylcoumarin from acetyl coenzyme A and 4 malonyl coenzyme A molecules. Further O-methylation by desB leads to the formation of 7-demethylsiderin. Then, an oxidative phenol coupling catalyzed by the cytochrome P450 monooxygenase desC forms the 6,8'-dimer M-desertorin A via dimerization the monomeric precursor, 7-demethylsiderin. M-desertorin A is further converted to M-desertorin C. The chain is O-methyltransferase desB from Aspergillus desertorum (Emericella desertorum).